A 464-amino-acid polypeptide reads, in one-letter code: Soluble pyridine nucleotide transhydrogenase (464 aa).

35–44 (EDKSQVGGNC) lines the FAD pocket.

The protein belongs to the class-I pyridine nucleotide-disulfide oxidoreductase family. FAD is required as a cofactor.

The protein resides in the cytoplasm. It catalyses the reaction NAD(+) + NADPH = NADH + NADP(+). Its function is as follows. Conversion of NADPH, generated by peripheral catabolic pathways, to NADH, which can enter the respiratory chain for energy generation. The chain is Soluble pyridine nucleotide transhydrogenase from Hahella chejuensis (strain KCTC 2396).